Here is a 121-residue protein sequence, read N- to C-terminus: Large ribosomal subunit protein bL19 (121 aa).

This sequence belongs to the bacterial ribosomal protein bL19 family.

In terms of biological role, this protein is located at the 30S-50S ribosomal subunit interface and may play a role in the structure and function of the aminoacyl-tRNA binding site. The sequence is that of Large ribosomal subunit protein bL19 from Symbiobacterium thermophilum (strain DSM 24528 / JCM 14929 / IAM 14863 / T).